The primary structure comprises 136 residues: Large ribosomal subunit protein uL16c (136 aa).

It belongs to the universal ribosomal protein uL16 family. Part of the 50S ribosomal subunit.

It localises to the plastid. Its subcellular location is the chloroplast. The sequence is that of Large ribosomal subunit protein uL16c from Zea mays (Maize).